A 574-amino-acid polypeptide reads, in one-letter code: MKSIIFITFFIFFLKKLNGLPNGYGVGLVDPNGQCMNYIGDSIDQPLCKNKLSNNGEFIYSTIGNSLNSQTLSQQTIAKSFEALTFIQNQCQDLLFAEYGICNIYLSPCIITTVAPLKNISLPQRLCNSACQRMVTNCPRLGEKIDCSISFLFPEVGTLYNLSDYGYKANGGLYEVPCFNPTADYDNSSSLNEFIEICPSPLLLKNSSDPKYSKRGYTYLPPTNCVLPCPVPNYTKEKWNQIENLSKVLSTISFVCSIYNILSFGILKKKKTKYTICISALSASVALINLGDIIKIGVGYEKVLCPEPGRFATQVDDPLCGLTAALFHVGICSTVLWTTTMAIYLYSAIKNIKLFKFRYFIIFNTGFSLTSLIIAASASKFEAGTGSIECWIRDRWYSICLFWLPCGICLLIGTICIASVIVEIYKVSKNIKLSESETIMRQIKPIISVILVSGSFTYLFIIFFDIERNFGGYRSAVTDYVLCLLNSTDNGIECHTSGPSYNPYFMFYFFMRFFGILFFLIYGTSKNARDSWYELFIKIKVSLSETSSTISNNSGGGSSQQKQQQQNEIKLEKI.

The signal sequence occupies residues Met-1 to Gly-19. Residues Leu-20–Ser-246 lie on the Extracellular side of the membrane. The region spanning Asp-30–Pro-181 is the FZ domain. Cystine bridges form between Cys-35–Cys-109, Cys-48–Cys-102, Cys-91–Cys-138, and Cys-127–Cys-178. N-linked (GlcNAc...) asparagine glycosylation is found at Asn-119, Asn-161, Asn-187, Asn-206, Asn-233, and Asn-244. The helical transmembrane segment at Lys-247–Leu-267 threads the bilayer. Residues Lys-268–Lys-273 lie on the Cytoplasmic side of the membrane. A helical membrane pass occupies residues Tyr-274–Ile-294. Residues Lys-295 to Ala-324 are Extracellular-facing. Residues Ala-325 to Leu-345 traverse the membrane as a helical segment. Residues Tyr-346 to Arg-358 are Cytoplasmic-facing. The chain crosses the membrane as a helical span at residues Tyr-359–Ser-379. At Lys-380–Leu-401 the chain is on the extracellular side. The chain crosses the membrane as a helical span at residues Phe-402–Val-422. The Cytoplasmic portion of the chain corresponds to Glu-423–Pro-445. The helical transmembrane segment at Ile-446 to Ile-466 threads the bilayer. The Extracellular segment spans residues Glu-467–Asn-502. N-linked (GlcNAc...) asparagine glycosylation is present at Asn-486. The helical transmembrane segment at Pro-503–Gly-523 threads the bilayer. The Cytoplasmic portion of the chain corresponds to Thr-524–Ile-574. The span at Ile-550–Glu-568 shows a compositional bias: low complexity. The interval Ile-550–Ile-574 is disordered.

Belongs to the G-protein coupled receptor Fz/Smo family.

The protein resides in the membrane. This Dictyostelium discoideum (Social amoeba) protein is Frizzled and smoothened-like protein G (fslG).